The following is a 582-amino-acid chain: Adenine deaminase (582 aa).

The protein belongs to the metallo-dependent hydrolases superfamily. Adenine deaminase family. The cofactor is Mn(2+).

It carries out the reaction adenine + H2O + H(+) = hypoxanthine + NH4(+). This chain is Adenine deaminase, found in Oceanobacillus iheyensis (strain DSM 14371 / CIP 107618 / JCM 11309 / KCTC 3954 / HTE831).